A 309-amino-acid chain; its full sequence is 11-beta-hydroxysteroid dehydrogenase-like 3 (309 aa).

A helical; Signal-anchor for type II membrane protein membrane pass occupies residues leucine 10–isoleucine 30. NADP(+) contacts are provided by residues glycine 54 to arginine 80 and aspartate 105. Serine 184 lines the substrate pocket. The Proton acceptor role is filled by tyrosine 197. NADP(+)-binding positions include tyrosine 197–lysine 201 and lysine 201.

It belongs to the short-chain dehydrogenases/reductases (SDR) family.

It localises to the membrane. The polypeptide is 11-beta-hydroxysteroid dehydrogenase-like 3 (HSD3) (Arabidopsis thaliana (Mouse-ear cress)).